The primary structure comprises 439 residues: Mitochondrial distribution and morphology protein 10 (439 aa).

The disordered stretch occupies residues 275–305; that stretch reads LPDATPPSFQVPSSSSSSSNPVSPSTSQPPT. The span at 280 to 305 shows a compositional bias: low complexity; it reads PPSFQVPSSSSSSSNPVSPSTSQPPT.

Belongs to the MDM10 family. As to quaternary structure, component of the ER-mitochondria encounter structure (ERMES) or MDM complex, composed of MMM1, MDM10, MDM12 and MDM34. Associates with the mitochondrial outer membrane sorting assembly machinery SAM(core) complex.

It localises to the mitochondrion outer membrane. Its function is as follows. Component of the ERMES/MDM complex, which serves as a molecular tether to connect the endoplasmic reticulum and mitochondria. Components of this complex are involved in the control of mitochondrial shape and protein biogenesis and may function in phospholipid exchange. MDM10 is involved in the late assembly steps of the general translocase of the mitochondrial outer membrane (TOM complex). Functions in the TOM40-specific route of the assembly of outer membrane beta-barrel proteins, including the association of TOM40 with the receptor TOM22 and small TOM proteins. Can associate with the SAM(core) complex as well as the MDM12-MMM1 complex, both involved in late steps of the major beta-barrel assembly pathway, that is responsible for biogenesis of all outer membrane beta-barrel proteins. May act as a switch that shuttles between both complexes and channels precursor proteins into the TOM40-specific pathway. Plays a role in mitochondrial morphology and in the inheritance of mitochondria. This Laccaria bicolor (strain S238N-H82 / ATCC MYA-4686) (Bicoloured deceiver) protein is Mitochondrial distribution and morphology protein 10.